We begin with the raw amino-acid sequence, 176 residues long: ATP-dependent protease subunit HslV (176 aa).

Residue Thr-6 is part of the active site. Residues Ser-161, Cys-164, and Thr-167 each contribute to the Na(+) site.

Belongs to the peptidase T1B family. HslV subfamily. As to quaternary structure, a double ring-shaped homohexamer of HslV is capped on each side by a ring-shaped HslU homohexamer. The assembly of the HslU/HslV complex is dependent on binding of ATP.

The protein resides in the cytoplasm. The enzyme catalyses ATP-dependent cleavage of peptide bonds with broad specificity.. With respect to regulation, allosterically activated by HslU binding. Its function is as follows. Protease subunit of a proteasome-like degradation complex believed to be a general protein degrading machinery. This chain is ATP-dependent protease subunit HslV, found in Thermosipho melanesiensis (strain DSM 12029 / CIP 104789 / BI429).